Reading from the N-terminus, the 412-residue chain is Putative competence-damage inducible protein (412 aa).

The protein belongs to the CinA family.

This is Putative competence-damage inducible protein from Bacillus cereus (strain Q1).